An 848-amino-acid polypeptide reads, in one-letter code: Beta-galactosidase 13 (848 aa).

The signal sequence occupies residues 1 to 27; the sequence is MKIHSSDHSWLLLAVLVILLSFSGALS. A glycan (N-linked (GlcNAc...) asparagine) is linked at asparagine 107. Glutamate 200 acts as the Proton donor in catalysis. The active-site Nucleophile is glutamate 271. Residues asparagine 272, asparagine 303, asparagine 376, asparagine 398, asparagine 782, asparagine 787, and asparagine 817 are each glycosylated (N-linked (GlcNAc...) asparagine). Positions 754-843 constitute an SUEL-type lectin domain; sequence DDVHLTANLK…KKLAVQVKCG (90 aa).

Belongs to the glycosyl hydrolase 35 family. In terms of tissue distribution, ubiquitous, with higher expression levels in roots, flowers and siliques.

The protein localises to the secreted. The protein resides in the extracellular space. It localises to the apoplast. It carries out the reaction Hydrolysis of terminal non-reducing beta-D-galactose residues in beta-D-galactosides.. The polypeptide is Beta-galactosidase 13 (BGAL13) (Arabidopsis thaliana (Mouse-ear cress)).